The primary structure comprises 148 residues: Ribonuclease H (148 aa).

In terms of domain architecture, RNase H type-1 spans 3–144 (AEETVEIFTD…ADALANRGIE (142 aa)). Positions 12, 50, 72, and 136 each coordinate Mg(2+). The interval 129–148 (HPENERADALANRGIEELKG) is disordered.

This sequence belongs to the RNase H family. Monomer. Mg(2+) is required as a cofactor.

The protein resides in the cytoplasm. The catalysed reaction is Endonucleolytic cleavage to 5'-phosphomonoester.. Endonuclease that specifically degrades the RNA of RNA-DNA hybrids. The polypeptide is Ribonuclease H (Dechloromonas aromatica (strain RCB)).